The sequence spans 440 residues: Xaa-Pro dipeptidase (440 aa).

Mn(2+) is bound by residues Asp-244, Asp-255, His-335, Glu-380, and Glu-419.

It belongs to the peptidase M24B family. Bacterial-type prolidase subfamily. It depends on Mn(2+) as a cofactor.

The catalysed reaction is Xaa-L-Pro dipeptide + H2O = an L-alpha-amino acid + L-proline. Functionally, splits dipeptides with a prolyl residue in the C-terminal position. The sequence is that of Xaa-Pro dipeptidase from Shewanella denitrificans (strain OS217 / ATCC BAA-1090 / DSM 15013).